The following is a 309-amino-acid chain: RHOMBOID-like protein 5 (309 aa).

The next 7 helical transmembrane spans lie at 27-47 (IPVP…FVTF), 113-133 (IWLH…MCIG), 140-160 (FGFM…SLVS), 170-190 (VSVG…SELI), 200-220 (CTAL…GFLP), 222-242 (VDNS…FVLL), and 274-294 (IFRF…YTKL). Ser-175 functions as the Nucleophile in the catalytic mechanism. His-227 serves as the catalytic Charge relay system.

This sequence belongs to the peptidase S54 family.

The protein localises to the membrane. The enzyme catalyses Cleaves type-1 transmembrane domains using a catalytic dyad composed of serine and histidine that are contributed by different transmembrane domains.. Its function is as follows. Probable rhomboid-type serine protease that catalyzes intramembrane proteolysis. May function in reproductive organs maturation. The polypeptide is RHOMBOID-like protein 5 (Arabidopsis thaliana (Mouse-ear cress)).